The sequence spans 230 residues: Ribonuclease 3 (230 aa).

The 121-residue stretch at 5–125 (YSRFYNILGY…VIGAIYLDSD (121 aa)) folds into the RNase III domain. E40 provides a ligand contact to Mg(2+). D44 is a catalytic residue. Mg(2+) is bound by residues D111 and E114. Residue E114 is part of the active site. Residues 153 to 223 (DSKSKLQEIL…AEKMIEMLSQ (71 aa)) form the DRBM domain.

It belongs to the ribonuclease III family. Homodimer. The cofactor is Mg(2+).

The protein resides in the cytoplasm. The enzyme catalyses Endonucleolytic cleavage to 5'-phosphomonoester.. In terms of biological role, digests double-stranded RNA. Involved in the processing of primary rRNA transcript to yield the immediate precursors to the large and small rRNAs (23S and 16S). Processes some mRNAs, and tRNAs when they are encoded in the rRNA operon. Processes pre-crRNA and tracrRNA of type II CRISPR loci if present in the organism. The chain is Ribonuclease 3 from Francisella tularensis subsp. holarctica (strain OSU18).